The following is a 191-amino-acid chain: Phosphoheptose isomerase (191 aa).

Residues 37-191 form the SIS domain; that stretch reads ITSSLKQGGK…LILLIEQSLL (155 aa). 52 to 54 contacts substrate; the sequence is NGG. Histidine 61 and glutamate 65 together coordinate Zn(2+). Substrate-binding positions include glutamate 65, 93–94, 119–121, serine 124, and glutamine 172; these read ND and STS. Positions 172 and 180 each coordinate Zn(2+).

Belongs to the SIS family. GmhA subfamily. Zn(2+) is required as a cofactor.

The protein resides in the cytoplasm. It carries out the reaction 2 D-sedoheptulose 7-phosphate = D-glycero-alpha-D-manno-heptose 7-phosphate + D-glycero-beta-D-manno-heptose 7-phosphate. It participates in carbohydrate biosynthesis; D-glycero-D-manno-heptose 7-phosphate biosynthesis; D-glycero-alpha-D-manno-heptose 7-phosphate and D-glycero-beta-D-manno-heptose 7-phosphate from sedoheptulose 7-phosphate: step 1/1. Catalyzes the isomerization of sedoheptulose 7-phosphate in D-glycero-D-manno-heptose 7-phosphate. This is Phosphoheptose isomerase from Cytophaga hutchinsonii (strain ATCC 33406 / DSM 1761 / CIP 103989 / NBRC 15051 / NCIMB 9469 / D465).